Here is a 94-residue protein sequence, read N- to C-terminus: Integration host factor subunit beta (94 aa).

It belongs to the bacterial histone-like protein family. Heterodimer of an alpha and a beta chain.

This protein is one of the two subunits of integration host factor, a specific DNA-binding protein that functions in genetic recombination as well as in transcriptional and translational control. This Yersinia enterocolitica serotype O:8 / biotype 1B (strain NCTC 13174 / 8081) protein is Integration host factor subunit beta.